A 3079-amino-acid polypeptide reads, in one-letter code: Inhibitory regulator protein IRA2 (3079 aa).

The interval 392–554 (NQNAHQGSSS…RASYDAHKTG (163 aa)) is disordered. A compositionally biased stretch (low complexity) spans 399-416 (SSSPSSSSPSSPPSSSSS). Residues 417 to 442 (DNNNQNIIAKSLSRQLSHHQSYIQQQ) show a composition bias toward polar residues. Positions 449 to 477 (SSWTTNSQSSTSLSSSTSNSTTTDFSTHT) are enriched in low complexity. Polar residues predominate over residues 488-497 (DTPTMSNITI). A compositionally biased stretch (low complexity) spans 498–528 (SASSLLSQTPTPTTQLQQRLNSAAAAAAAAA). Residues 529 to 546 (SPSNSTPTGYTAEQQSRA) are compositionally biased toward polar residues. The residue at position 635 (T635) is a Phosphothreonine. Disordered stretches follow at residues 867 to 898 (FKGS…PLGL), 912 to 935 (GSST…LSSD), and 952 to 980 (GPSS…VQRP). Composition is skewed to low complexity over residues 873–894 (SLCS…TPVS) and 921–934 (NVNS…NLSS). Polar residues predominate over residues 961 to 980 (IPTTLTSPPGTEKSSPVQRP). In terms of domain architecture, Ras-GAP spans 1717–1922 (NATHIVVAQL…DRIFRFLAEL (206 aa)).

It is found in the cytoplasm. Inhibitory regulator of the Ras-cyclic AMP pathway. Stimulates the GTPase activity of Ras proteins. The sequence is that of Inhibitory regulator protein IRA2 (IRA2) from Saccharomyces cerevisiae (strain ATCC 204508 / S288c) (Baker's yeast).